Here is a 376-residue protein sequence, read N- to C-terminus: D-alanine--D-alanine ligase (376 aa).

The 207-residue stretch at lysine 155–aspartate 361 folds into the ATP-grasp domain. Glutamate 188–glutamate 243 serves as a coordination point for ATP. Aspartate 314, glutamate 328, and asparagine 330 together coordinate Mg(2+).

Belongs to the D-alanine--D-alanine ligase family. It depends on Mg(2+) as a cofactor. Requires Mn(2+) as cofactor.

The protein resides in the cytoplasm. It carries out the reaction 2 D-alanine + ATP = D-alanyl-D-alanine + ADP + phosphate + H(+). The protein operates within cell wall biogenesis; peptidoglycan biosynthesis. In terms of biological role, cell wall formation. In Acetivibrio thermocellus (strain ATCC 27405 / DSM 1237 / JCM 9322 / NBRC 103400 / NCIMB 10682 / NRRL B-4536 / VPI 7372) (Clostridium thermocellum), this protein is D-alanine--D-alanine ligase.